The sequence spans 145 residues: D-aminoacyl-tRNA deacylase (145 aa).

The Gly-cisPro motif, important for rejection of L-amino acids signature appears at 137 to 138 (GP).

Belongs to the DTD family. As to quaternary structure, homodimer.

It localises to the cytoplasm. It carries out the reaction glycyl-tRNA(Ala) + H2O = tRNA(Ala) + glycine + H(+). It catalyses the reaction a D-aminoacyl-tRNA + H2O = a tRNA + a D-alpha-amino acid + H(+). Its function is as follows. An aminoacyl-tRNA editing enzyme that deacylates mischarged D-aminoacyl-tRNAs. Also deacylates mischarged glycyl-tRNA(Ala), protecting cells against glycine mischarging by AlaRS. Acts via tRNA-based rather than protein-based catalysis; rejects L-amino acids rather than detecting D-amino acids in the active site. By recycling D-aminoacyl-tRNA to D-amino acids and free tRNA molecules, this enzyme counteracts the toxicity associated with the formation of D-aminoacyl-tRNA entities in vivo and helps enforce protein L-homochirality. This Pseudomonas aeruginosa (strain LESB58) protein is D-aminoacyl-tRNA deacylase.